The sequence spans 372 residues: RIHIEKIIGSGESGEVCYGRLQVPGQRDVPVAIKALKAGYTERQRQDFLREAAIMGQFDHPNIIRLEGVVTRGRLAMIVTEYMENGSLDAFLRTHDGQFTILQLVGMLKGVGAGMRYLSDLGYIHRDLAARNILVDGRLVCKVSDFGLSRALEDDPEAAYTTAGGKIPIRWTAPEAIAFRTFSSASDVWSFGVVMWEVLAYGERPYWNMTNQDVISSVEEGYRLPAPMGCPRALHQLMLDCWHKDRAQRPRFSHVVSVLEALVHSPESLRATATVSRCPAPAFARSCFDLRAGGNGNGDLTVGDWLDSIRMGRYRDHFAAGGYSSLGMVLHMNAQDVRALGITLMGHQKKILGSIQTMRSQLSCTQGPRRHL.

In terms of domain architecture, Protein kinase spans 2–263 (IHIEKIIGSG…HVVSVLEALV (262 aa)). ATP contacts are provided by residues 8-16 (IGSGESGEV) and K34. Catalysis depends on D127, which acts as the Proton acceptor. Y206 carries the phosphotyrosine; by autocatalysis modification. Residues 297-372 (NGDLTVGDWL…SCTQGPRRHL (76 aa)) enclose the SAM domain. Positions 370–372 (RHL) match the PDZ-binding motif.

As to quaternary structure, heterotetramer upon binding of the ligand. The heterotetramer is composed of an ephrin dimer and a receptor dimer. Oligomerization is probably required to induce biological responses. May also form heterodimers with other ephrin receptors. Interacts with FYN; possible downstream effector of EPHA8 in regulation of cell adhesion. Interacts with PIK3CG; regulates integrin-mediated cell adhesion to substrate. Interacts with TIAM1; regulates clathrin-mediated endocytosis of EPHA8. Interacts with ANKS1A and ANKS1B; EPHA8 kinase activity-independent but stimulated by EPHA8 ubiquitination. In terms of processing, phosphorylated. Phosphorylation is stimulated upon binding of its ligands including EFNA2, EFNA3 and EFNA5. Autophosphorylation on Tyr-206 modulates tyrosine kinase activity. Post-translationally, ubiquitinated. Ubiquitination by CBL regulates the receptor stability and activity through proteasomal degradation. ANKS1A prevents ubiquitination and degradation. Most abundant in brain.

It localises to the cell membrane. The protein localises to the cell projection. Its subcellular location is the early endosome membrane. It carries out the reaction L-tyrosyl-[protein] + ATP = O-phospho-L-tyrosyl-[protein] + ADP + H(+). In terms of biological role, receptor tyrosine kinase which binds promiscuously GPI-anchored ephrin-A family ligands residing on adjacent cells, leading to contact-dependent bidirectional signaling into neighboring cells. The signaling pathway downstream of the receptor is referred to as forward signaling while the signaling pathway downstream of the ephrin ligand is referred to as reverse signaling. The GPI-anchored ephrin-A EFNA2, EFNA3, and EFNA5 are able to activate EPHA8 through phosphorylation. With EFNA5 may regulate integrin-mediated cell adhesion and migration on fibronectin substrate but also neurite outgrowth. During development of the nervous system also plays a role in axon guidance. Downstream effectors of the EPHA8 signaling pathway include FYN which promotes cell adhesion upon activation by EPHA8 and the MAP kinases in the stimulation of neurite outgrowth. The polypeptide is Ephrin type-A receptor 8 (Epha8) (Rattus norvegicus (Rat)).